We begin with the raw amino-acid sequence, 460 residues long: V-type ATP synthase beta chain (460 aa).

This sequence belongs to the ATPase alpha/beta chains family.

Produces ATP from ADP in the presence of a proton gradient across the membrane. The V-type beta chain is a regulatory subunit. The polypeptide is V-type ATP synthase beta chain (Clostridium novyi (strain NT)).